The following is a 254-amino-acid chain: Vitamin B12 import ATP-binding protein BtuD (254 aa).

The ABC transporter domain maps to 3–239 (INYISVGNRL…ENLQQVFETP (237 aa)). 29 to 36 (GPNGSGKS) provides a ligand contact to ATP.

It belongs to the ABC transporter superfamily. Vitamin B12 importer (TC 3.A.1.13.1) family. The complex is composed of two ATP-binding proteins (BtuD), two transmembrane proteins (BtuC) and a solute-binding protein (BtuF).

It localises to the cell inner membrane. The enzyme catalyses an R-cob(III)alamin(out) + ATP + H2O = an R-cob(III)alamin(in) + ADP + phosphate + H(+). Its function is as follows. Part of the ABC transporter complex BtuCDF involved in vitamin B12 import. Responsible for energy coupling to the transport system. This is Vitamin B12 import ATP-binding protein BtuD from Vibrio vulnificus (strain CMCP6).